We begin with the raw amino-acid sequence, 644 residues long: Sodium/hydrogen exchanger 9 (644 aa).

Topologically, residues Met-1–Gly-20 are lumenal. Residues Ala-21–Phe-41 traverse the membrane as a helical segment. Topologically, residues Lys-42 to Arg-45 are cytoplasmic. A helical transmembrane segment spans residues Phe-46–Leu-66. The Lumenal portion of the chain corresponds to Arg-67–Lys-126. A helical membrane pass occupies residues Met-127 to Gly-147. The Cytoplasmic portion of the chain corresponds to Tyr-148–Thr-164. The chain crosses the membrane as a helical span at residues Tyr-165 to Val-185. Topologically, residues Lys-186 to Asp-203 are lumenal. The chain crosses the membrane as a helical span at residues Cys-204–His-224. The Cytoplasmic portion of the chain corresponds to Glu-225–Leu-235. A helical transmembrane segment spans residues Leu-236–Ile-256. The Lumenal portion of the chain corresponds to Tyr-257–Asn-277. Residues Phe-278–Leu-298 traverse the membrane as a helical segment. Over Leu-299–Pro-309 the chain is Cytoplasmic. The helical transmembrane segment at Met-310–Ala-327 threads the bilayer. Residues Glu-328–Thr-333 lie on the Lumenal side of the membrane. The helical transmembrane segment at Gly-334–Tyr-350 threads the bilayer. Over Asn-351 to Leu-364 the chain is Cytoplasmic. The helical transmembrane segment at Phe-365–Phe-385 threads the bilayer. A topological domain (lumenal) is located at residue Thr-386. A helical transmembrane segment spans residues Phe-387–Ala-407. The Cytoplasmic portion of the chain corresponds to Arg-408–Trp-429. The helical transmembrane segment at Asn-430–Ile-450 threads the bilayer. The Lumenal segment spans residues Arg-451–Thr-465. A helical transmembrane segment spans residues Leu-466–Trp-486. Residues Leu-487–Asp-644 lie on the Cytoplasmic side of the membrane. The tract at residues Tyr-590–Asp-644 is disordered.

The protein belongs to the monovalent cation:proton antiporter 1 (CPA1) transporter (TC 2.A.36) family. In terms of assembly, homodimer; phosphatidylinositol-4,5-bisphosphate (PIP2) and phosphatidylinositol 3,4,5-trisphosphate (PIP3) could be involved in the dimer stabilization. Interacts (via the C-terminus) with RACK1. Interacts with CHP1. In terms of tissue distribution, expressed in the brain. Highly expressed in immune cells, specifically macrophages.

It localises to the late endosome membrane. The protein localises to the cell membrane. Its subcellular location is the early endosome membrane. The protein resides in the recycling endosome membrane. It is found in the cytoplasmic vesicle. It localises to the phagosome membrane. It catalyses the reaction Na(+)(in) + H(+)(out) = Na(+)(out) + H(+)(in). The catalysed reaction is K(+)(in) + H(+)(out) = K(+)(out) + H(+)(in). Its function is as follows. Endosomal Na(+), K(+)/H(+) antiporter. Mediates the electroneutral exchange of endosomal luminal H(+) for a cytosolic Na(+) or K(+). By facilitating proton efflux, SLC9A9 counteracts the acidity generated by vacuolar (V)-ATPase, thereby limiting luminal acidification. Regulates organellar pH and consequently, endosome maturation and endocytic trafficking of plasma membrane receptors and neurotransporters. Promotes the recycling of transferrin receptors back to the cell surface to facilitate additional iron uptake in the brain. Regulates synaptic transmission by regulating the luminal pH of axonal endosomes. Regulates phagosome lumenal pH, thus affecting phagosome maturation, and consequently, microbicidal activity in macrophages. Can also be active at the cell surface of specialized cells, e.g., in the inner ear hair bundles uses the high K(+) of the endolymph to regulate intracelular pH. The chain is Sodium/hydrogen exchanger 9 (Slc9a9) from Mus musculus (Mouse).